Consider the following 487-residue polypeptide: Kynureninase 1 (487 aa).

Pyridoxal 5'-phosphate is bound by residues L147, T148, 175–178 (FPSD), S232, D261, H264, and Y286. K287 carries the N6-(pyridoxal phosphate)lysine modification. Pyridoxal 5'-phosphate contacts are provided by W327 and N355.

This sequence belongs to the kynureninase family. Homodimer. The cofactor is pyridoxal 5'-phosphate.

Its subcellular location is the cytoplasm. The enzyme catalyses L-kynurenine + H2O = anthranilate + L-alanine + H(+). It carries out the reaction 3-hydroxy-L-kynurenine + H2O = 3-hydroxyanthranilate + L-alanine + H(+). It participates in amino-acid degradation; L-kynurenine degradation; L-alanine and anthranilate from L-kynurenine: step 1/1. The protein operates within cofactor biosynthesis; NAD(+) biosynthesis; quinolinate from L-kynurenine: step 2/3. Catalyzes the cleavage of L-kynurenine (L-Kyn) and L-3-hydroxykynurenine (L-3OHKyn) into anthranilic acid (AA) and 3-hydroxyanthranilic acid (3-OHAA), respectively. The chain is Kynureninase 1 (bna5-1) from Aspergillus oryzae (strain ATCC 42149 / RIB 40) (Yellow koji mold).